A 138-amino-acid polypeptide reads, in one-letter code: Basic phospholipase A2 DAV-N6 (138 aa).

The N-terminal stretch at 1–16 (MRTLWIVAVLLVSVEG) is a signal peptide. Cystine bridges form between Cys42-Cys131, Cys44-Cys60, Cys59-Cys111, Cys65-Cys138, Cys66-Cys104, Cys73-Cys97, and Cys91-Cys102. Residues Tyr43, Gly45, and Gly47 each coordinate Ca(2+). His63 is a catalytic residue. Asp64 serves as a coordination point for Ca(2+). Residue Asp105 is part of the active site.

Requires Ca(2+) as cofactor. In terms of tissue distribution, expressed by the venom gland.

Its subcellular location is the secreted. It carries out the reaction a 1,2-diacyl-sn-glycero-3-phosphocholine + H2O = a 1-acyl-sn-glycero-3-phosphocholine + a fatty acid + H(+). Snake venom phospholipase A2 (PLA2) that inhibits neuromuscular transmission by blocking acetylcholine release from the nerve termini. PLA2 catalyzes the calcium-dependent hydrolysis of the 2-acyl groups in 3-sn-phosphoglycerides. This Deinagkistrodon acutus (Hundred-pace snake) protein is Basic phospholipase A2 DAV-N6.